A 653-amino-acid chain; its full sequence is 1-deoxy-D-xylulose-5-phosphate synthase (653 aa).

Thiamine diphosphate contacts are provided by residues H86 and 127-129 (GHS). D158 serves as a coordination point for Mg(2+). Thiamine diphosphate contacts are provided by residues 159-160 (GA), N187, and F294. N187 contacts Mg(2+). Residues 309–324 (KLEKTTSEPPPKKEPR) show a composition bias toward basic and acidic residues. The disordered stretch occupies residues 309 to 343 (KLEKTTSEPPPKKEPRSPNAATAEPEAQPKPQPKP). Thiamine diphosphate is bound at residue E395.

This sequence belongs to the transketolase family. DXPS subfamily. As to quaternary structure, homodimer. The cofactor is Mg(2+). It depends on thiamine diphosphate as a cofactor.

It catalyses the reaction D-glyceraldehyde 3-phosphate + pyruvate + H(+) = 1-deoxy-D-xylulose 5-phosphate + CO2. It functions in the pathway metabolic intermediate biosynthesis; 1-deoxy-D-xylulose 5-phosphate biosynthesis; 1-deoxy-D-xylulose 5-phosphate from D-glyceraldehyde 3-phosphate and pyruvate: step 1/1. Its function is as follows. Catalyzes the acyloin condensation reaction between C atoms 2 and 3 of pyruvate and glyceraldehyde 3-phosphate to yield 1-deoxy-D-xylulose-5-phosphate (DXP). This chain is 1-deoxy-D-xylulose-5-phosphate synthase, found in Chromohalobacter salexigens (strain ATCC BAA-138 / DSM 3043 / CIP 106854 / NCIMB 13768 / 1H11).